The sequence spans 156 residues: MIKSLFYTFLQTKHQEESNNSRDPNYPLFPQEIEIRPIAYFPWEIIKTLTTDEIISKFQLPMEKIRDTMLRHASEEDIYRTKFMSCETNILVKDLDTNTIHQGKLWKHPCENNFALRESWIEEFVKRRRLVVGMVVGMYWDFEACMFCFSVLDGRQ.

The segment at residues 57-155 (KFQLPMEKIR…MFCFSVLDGR (99 aa)) is a DNA-binding region (TF-B3).

It is found in the nucleus. This chain is B3 domain-containing protein At5g26805, found in Arabidopsis thaliana (Mouse-ear cress).